The following is a 205-amino-acid chain: MESKLRVGIAGPVGSGKTAIIQRLCENLKDRLEIAVVTNDIYTQEDAKFLTNSKALAPERIKGVETGGCPHTAIREDCSINRIAVEELEHKFTTLDLVFVESGGDNLAASFSPELVDVCIYIIDVAAGDKIPRKGGPGITRSDLLVINKIDLAEMVGASLKIMERDTLLMRKNLPWCFTNTKTGEGIKIIEGFLCNQIPSVHKMV.

A GTP-binding site is contributed by 11–18; the sequence is GPVGSGKT.

It belongs to the SIMIBI class G3E GTPase family. UreG subfamily. Homodimer. UreD, UreF and UreG form a complex that acts as a GTP-hydrolysis-dependent molecular chaperone, activating the urease apoprotein by helping to assemble the nickel containing metallocenter of UreC. The UreE protein probably delivers the nickel.

Its subcellular location is the cytoplasm. Its function is as follows. Facilitates the functional incorporation of the urease nickel metallocenter. This process requires GTP hydrolysis, probably effectuated by UreG. The protein is Urease accessory protein UreG of Prochlorococcus marinus (strain NATL2A).